The sequence spans 382 residues: Ribosomal RNA large subunit methyltransferase G (382 aa).

Belongs to the methyltransferase superfamily. RlmG family.

It is found in the cytoplasm. It catalyses the reaction guanosine(1835) in 23S rRNA + S-adenosyl-L-methionine = N(2)-methylguanosine(1835) in 23S rRNA + S-adenosyl-L-homocysteine + H(+). Specifically methylates the guanine in position 1835 (m2G1835) of 23S rRNA. This chain is Ribosomal RNA large subunit methyltransferase G, found in Psychromonas ingrahamii (strain DSM 17664 / CCUG 51855 / 37).